We begin with the raw amino-acid sequence, 372 residues long: Peroxisomal biogenesis factor 3 (372 aa).

The Cytoplasmic portion of the chain corresponds to 1 to 15; it reads MLRSMWNFLKRHKKK. A targeting to peroxisomes region spans residues 1–45; the sequence is MLRSMWNFLKRHKKKCIFLGTVLGGVYILGKYGQKKLREIQEREA. Residues 16–36 traverse the membrane as a helical segment; sequence CIFLGTVLGGVYILGKYGQKK. Residues 37–116 are Peroxisomal-facing; the sequence is LREIQEREAA…LKIISFTRSI (80 aa). The chain crosses the membrane as a helical span at residues 117 to 140; it reads VAVYSTCMLVVLLRVQLNIIGGYI. Residues 120-136 form an interaction with PEX19 region; the sequence is YSTCMLVVLLRVQLNII. Residues 141–372 are Cytoplasmic-facing; that stretch reads YLDNATVGKN…AFSTPQQLEK (232 aa).

Belongs to the peroxin-3 family. As to quaternary structure, interacts with PEX19.

It localises to the peroxisome membrane. Its function is as follows. Involved in peroxisome biosynthesis and integrity. Assembles membrane vesicles before the matrix proteins are translocated. As a docking factor for PEX19, is necessary for the import of peroxisomal membrane proteins in the peroxisomes. The chain is Peroxisomal biogenesis factor 3 (Pex3) from Rattus norvegicus (Rat).